Here is a 582-residue protein sequence, read N- to C-terminus: Isopropyl malate synthase AMT7 (582 aa).

The 281-residue stretch at P61 to D341 folds into the Pyruvate carboxyltransferase domain.

This sequence belongs to the alpha-IPM synthase/homocitrate synthase family. LeuA type 2 subfamily.

The catalysed reaction is 3-methyl-2-oxobutanoate + acetyl-CoA + H2O = (2S)-2-isopropylmalate + CoA + H(+). Its pathway is mycotoxin biosynthesis. Isopropyl malate synthase; part of the gene clusters that mediate the biosynthesis of AM-toxins, host-selective toxins (HSTs) causing Alternaria blotch on apple, a worldwide distributed disease. AM-toxins are cyclic depsipeptides containing the 3 residues 2-hydroxy-isovaleric acid (2-HIV), dehydroalanine, L-alanine which are common for all 3 AM-toxins I to III. The fourth precursor is L-alpha-amino-methoxyphenyl-valeric acid (L-Amv) for AM-toxin I, L-alpha-amino-phenyl-valeric acid (L-Apv) for AM-toxin II, and L-alpha-amino-hydroxyphenyl-valeric acid (L-Ahv) for AM-toxin III. AM-toxins have two target sites for affecting susceptible apple cells; they cause invagination of the plasma membrane and electrolyte loss and chloroplast disorganization. The non-ribosomal peptide synthetase AMT1 contains 4 catalytic modules and is responsible for activation of each residue in AM-toxin. The aldo-keto reductase AMT2 catalyzes the conversion of 2-keto-isovaleric acid (2-KIV) to 2-hydroxy-isovaleric acid (2-HIV), one of the precursor residues incorporated by AMT1 during AM-toxin biosynthesis, by reduction of its ketone to an alcohol. The cytochrome P450 monooxygenase AMT3 and the thioesterase AMT4 are also important for AM-toxin production, but their exact function within the AM-toxin biosynthesis are not known yet. Up to 21 proteins (including AMT1 to AMT4) are predicted to be involved in AM-toxin biosynthesis since their expression ishighly up-regulated in AM-toxin-producing cultures. This chain is Isopropyl malate synthase AMT7, found in Alternaria alternata (Alternaria rot fungus).